A 238-amino-acid chain; its full sequence is Probable succinyl-CoA:3-ketoacid coenzyme A transferase subunit A (238 aa).

24-30 (GGFGLCG) lines the CoA pocket.

It belongs to the 3-oxoacid CoA-transferase subunit A family. Heterodimer of a subunit A and a subunit B.

It carries out the reaction a 3-oxo acid + succinyl-CoA = a 3-oxoacyl-CoA + succinate. This chain is Probable succinyl-CoA:3-ketoacid coenzyme A transferase subunit A (scoA), found in Bacillus subtilis (strain 168).